The chain runs to 183 residues: BLOC-1-related complex subunit 8 homolog (183 aa).

The interval 152–183 (MIGPGTATGRTEAQAATSSNPGELQRSYTTLH) is disordered. Residues 159 to 183 (TGRTEAQAATSSNPGELQRSYTTLH) show a composition bias toward polar residues.

It belongs to the BORCS8 family.

The protein localises to the lysosome membrane. Its function is as follows. May participate in the coupling of lysosomes to microtubule plus-end-directed kinesin motor. The chain is BLOC-1-related complex subunit 8 homolog from Drosophila melanogaster (Fruit fly).